Reading from the N-terminus, the 355-residue chain is MSNVIIDLKNIDITFTQKRRTIQAVKDVSIQIEKGDIYGIVGYSGAGKSTLVRAINLLQVPTAGKITIGEDVTFENGQVQLTTKELRQKRQTIGMIFQHFNLMAQKTAYENVAFALRHSKLSNEEKDKKIRGLLELVDLADRAENYPAQLSGGQKQRVAIARALANDPEILISDESTSALDPKTTKQILSLLQDLNKKLGLTVVMITHEMQIVKDICNRVAVMQNGQLLEEGSVLDIFSNPQEDLTQEFIETAAGIEDALAKINAQPLVKNLPASALLVQLKYVGSSTDRPLLTEIFKDFGVSGNILYGNVEILGDTPVGELVVVLDGDSDKVIAALKAIENAGVSLRVLKKGAQ.

An ABC transporter domain is found at 8 to 250; it reads LKNIDITFTQ…PQEDLTQEFI (243 aa). 42-49 is an ATP binding site; that stretch reads GYSGAGKS.

It belongs to the ABC transporter superfamily. Methionine importer (TC 3.A.1.24) family. In terms of assembly, the complex is composed of two ATP-binding proteins (MetN), two transmembrane proteins (MetI) and a solute-binding protein (MetQ).

The protein localises to the cell membrane. The catalysed reaction is L-methionine(out) + ATP + H2O = L-methionine(in) + ADP + phosphate + H(+). It catalyses the reaction D-methionine(out) + ATP + H2O = D-methionine(in) + ADP + phosphate + H(+). In terms of biological role, part of the ABC transporter complex MetNIQ involved in methionine import. Responsible for energy coupling to the transport system. The protein is Methionine import ATP-binding protein MetN of Streptococcus thermophilus (strain CNRZ 1066).